The chain runs to 21 residues: Short neurotoxin E1 (21 aa).

The segment at methionine 1 to glutamine 21 is disordered.

In terms of processing, contains 4 disulfide bonds. In terms of tissue distribution, expressed by the venom gland.

It localises to the secreted. Binds to muscle nicotinic acetylcholine receptor (nAChR) and inhibit acetylcholine from binding to the receptor, thereby impairing neuromuscular transmission. The polypeptide is Short neurotoxin E1 (Micrurus pyrrhocryptus (Coral snake)).